A 214-amino-acid polypeptide reads, in one-letter code: Outer-membrane lipoprotein LolB (214 aa).

The first 30 residues, 1 to 30 (MKHVSSPHPCAAIASARVWLGLVLVALLAG), serve as a signal peptide directing secretion. The N-palmitoyl cysteine moiety is linked to residue cysteine 31. A lipid anchor (S-diacylglycerol cysteine) is attached at cysteine 31.

Belongs to the LolB family. As to quaternary structure, monomer.

The protein resides in the cell outer membrane. Functionally, plays a critical role in the incorporation of lipoproteins in the outer membrane after they are released by the LolA protein. This is Outer-membrane lipoprotein LolB from Chromohalobacter salexigens (strain ATCC BAA-138 / DSM 3043 / CIP 106854 / NCIMB 13768 / 1H11).